Consider the following 356-residue polypeptide: Chorismate synthase (356 aa).

R44 and R49 together coordinate NADP(+). Residues 121–123 (HFS), G278, 293–297 (KPTPS), and R320 contribute to the FMN site.

The protein belongs to the chorismate synthase family. FMNH2 is required as a cofactor.

The catalysed reaction is 5-O-(1-carboxyvinyl)-3-phosphoshikimate = chorismate + phosphate. It functions in the pathway metabolic intermediate biosynthesis; chorismate biosynthesis; chorismate from D-erythrose 4-phosphate and phosphoenolpyruvate: step 7/7. In terms of biological role, catalyzes the anti-1,4-elimination of the C-3 phosphate and the C-6 proR hydrogen from 5-enolpyruvylshikimate-3-phosphate (EPSP) to yield chorismate, which is the branch point compound that serves as the starting substrate for the three terminal pathways of aromatic amino acid biosynthesis. This reaction introduces a second double bond into the aromatic ring system. The polypeptide is Chorismate synthase (Thermococcus gammatolerans (strain DSM 15229 / JCM 11827 / EJ3)).